The primary structure comprises 77 residues: Small ribosomal subunit protein bS20 (77 aa).

Residues 47–77 (ASSSIDKAESKGLIHKNKASRDKARLAAKLG) form a disordered region.

Belongs to the bacterial ribosomal protein bS20 family.

Its function is as follows. Binds directly to 16S ribosomal RNA. The protein is Small ribosomal subunit protein bS20 of Streptococcus pyogenes serotype M1.